A 199-amino-acid chain; its full sequence is MARCKS-related protein (199 aa).

Residues 1-199 (MGSQSSKAPR…GPASASAENE (199 aa)) are disordered. A lipid anchor (N-myristoyl glycine) is attached at Gly-2. Thr-14 carries the post-translational modification Phosphothreonine. The span at 16-26 (EEAAGASPAKA) shows a compositional bias: low complexity. A phosphoserine mark is found at Ser-22, Ser-36, and Ser-48. Low complexity predominate over residues 53-64 (GADEAAGATGDA). Residue Ser-71 is modified to Phosphoserine. The segment covering 74–85 (AEAKGEVAPKET) has biased composition (basic and acidic residues). Phosphothreonine is present on Thr-85. Residues 86 to 98 (PKKKKKFSFKKPF) show a composition bias toward basic residues. The tract at residues 87-110 (KKKKKFSFKKPFKLSGLSFKRNRK) is effector domain involved in lipid-binding and calmodulin-binding. Ser-93, Ser-101, and Ser-104 each carry phosphoserine; by PKC. Ser-119 is subject to Phosphoserine. The residue at position 120 (Ser-120) is a Phosphoserine; by MAPK8. 2 positions are modified to phosphoserine: Ser-132 and Ser-135. Thr-148 is subject to Phosphothreonine; by MAPK8. Residues Ser-151, Ser-162, and Ser-165 each carry the phosphoserine modification. The span at 175–199 (GPQAAEPSTPSGPESGPASASAENE) shows a compositional bias: low complexity. Residue Thr-183 is modified to Phosphothreonine; by MAPK8.

This sequence belongs to the MARCKS family. In terms of assembly, binds to filamentous actin (F-actin), but not to monomeric G-actin, independently of its phosphorylation status. Interacts with calmodulin. Phosphorylated. Phosphorylation at Ser-120 and Thr-183 is non-redundantly catalyzed by MAPK8 in vivo. Phosphorylation at Thr-148 is preferentially catalyzed by MAPK8 in vivo, but this modification can also be catalyzed by other kinases in the absence of MAPK8. May be phosphorylated by protein kinase C, which disrupts the interaction with calmodulin.

The protein localises to the cytoplasm. It localises to the cytoskeleton. The protein resides in the cell membrane. In terms of biological role, controls cell movement by regulating actin cytoskeleton homeostasis and filopodium and lamellipodium formation. When unphosphorylated, induces cell migration. When phosphorylated by MAPK8, induces actin bundles formation and stabilization, thereby reducing actin plasticity, hence restricting cell movement, including neuronal migration. May be involved in coupling the protein kinase C and calmodulin signal transduction systems. This is MARCKS-related protein (Marcksl1) from Rattus norvegicus (Rat).